A 534-amino-acid polypeptide reads, in one-letter code: BEN domain-containing protein 4 (534 aa).

Disordered stretches follow at residues 1–24 (MEEEMQPAEEGPSVPKIYKQRSPY), 48–128 (ELPH…AASS), and 287–322 (VHTLGGWTSPATSESHGHPSSSTLPEEEEEEDEEGY). Residues 53-63 (RAPPPPPPPFA) are compositionally biased toward pro residues. Over residues 69–83 (SISSSEPPPQQFQAQ) the composition is skewed to polar residues. The span at 91–109 (GRAAAAASSSSPSCTPATS) shows a compositional bias: low complexity. Positions 295 to 310 (SPATSESHGHPSSSTL) are enriched in polar residues. Over residues 311 to 321 (PEEEEEEDEEG) the composition is skewed to acidic residues. Residues 324–351 (PRCQELEQEVISLQQENEELRRKLESIP) are a coiled coil. One can recognise a BEN domain in the interval 390–498 (NYPVYITSKQ…DAVGHARQGR (109 aa)).

The chain is BEN domain-containing protein 4 (BEND4) from Homo sapiens (Human).